The sequence spans 191 residues: Fe/S biogenesis protein NfuA (191 aa).

[4Fe-4S] cluster-binding residues include Cys149 and Cys152.

The protein belongs to the NfuA family. In terms of assembly, homodimer. [4Fe-4S] cluster is required as a cofactor.

Functionally, involved in iron-sulfur cluster biogenesis. Binds a 4Fe-4S cluster, can transfer this cluster to apoproteins, and thereby intervenes in the maturation of Fe/S proteins. Could also act as a scaffold/chaperone for damaged Fe/S proteins. This Escherichia coli O139:H28 (strain E24377A / ETEC) protein is Fe/S biogenesis protein NfuA.